A 249-amino-acid polypeptide reads, in one-letter code: UPF0309 protein GTNG_1302 (249 aa).

Residues 31-214 (VSKAVQNGGI…ALMAENGVEP (184 aa)) enclose the SIS domain.

Belongs to the UPF0309 family.

This chain is UPF0309 protein GTNG_1302, found in Geobacillus thermodenitrificans (strain NG80-2).